Here is a 91-residue protein sequence, read N- to C-terminus: Protein xpaR7 (91 aa).

The protein is Protein xpaR7 (xpaR7) of Bacillus licheniformis.